A 200-amino-acid polypeptide reads, in one-letter code: Holliday junction branch migration complex subunit RuvA (200 aa).

The segment at 1 to 64 is domain I; it reads MFAYFKGSLV…EDALQLYGFF (64 aa). The interval 65-143 is domain II; it reads KEEERQLFRL…KLPLVTPAAG (79 aa). The flexible linker stretch occupies residues 143-147; the sequence is GKAAM. The tract at residues 148-200 is domain III; the sequence is PSHHVKDDAVHALVTLGFSRLLAQKAVSALLEEKPEQSVEEVIKYALATIHNS.

The protein belongs to the RuvA family. Homotetramer. Forms an RuvA(8)-RuvB(12)-Holliday junction (HJ) complex. HJ DNA is sandwiched between 2 RuvA tetramers; dsDNA enters through RuvA and exits via RuvB. An RuvB hexamer assembles on each DNA strand where it exits the tetramer. Each RuvB hexamer is contacted by two RuvA subunits (via domain III) on 2 adjacent RuvB subunits; this complex drives branch migration. In the full resolvosome a probable DNA-RuvA(4)-RuvB(12)-RuvC(2) complex forms which resolves the HJ.

Its subcellular location is the cytoplasm. Its function is as follows. The RuvA-RuvB-RuvC complex processes Holliday junction (HJ) DNA during genetic recombination and DNA repair, while the RuvA-RuvB complex plays an important role in the rescue of blocked DNA replication forks via replication fork reversal (RFR). RuvA specifically binds to HJ cruciform DNA, conferring on it an open structure. The RuvB hexamer acts as an ATP-dependent pump, pulling dsDNA into and through the RuvAB complex. HJ branch migration allows RuvC to scan DNA until it finds its consensus sequence, where it cleaves and resolves the cruciform DNA. The sequence is that of Holliday junction branch migration complex subunit RuvA from Chlorobium phaeobacteroides (strain DSM 266 / SMG 266 / 2430).